Consider the following 243-residue polypeptide: Cell surface glycoprotein CD200 receptor 1-B (243 aa).

The Cytoplasmic portion of the chain corresponds to 1 to 29; that stretch reads MEISQQAGWCKKPASPMNTRAALEAVRNT. A helical; Signal-anchor for type II membrane protein membrane pass occupies residues 30–47; it reads AWTIVLLTSAAVMGASGI. Residues 47 to 146 enclose the Ig-like V-type domain; it reads ISRVSANLGH…GNFHYLYHLT (100 aa). Topologically, residues 48 to 243 are lumenal; it reads SRVSANLGHS…LAQLPGGSAP (196 aa). Disulfide bonds link Cys-62–Cys-130 and Cys-165–Cys-214. Asn-64, Asn-67, Asn-127, Asn-193, Asn-222, and Asn-228 each carry an N-linked (GlcNAc...) asparagine glycan. One can recognise an Ig-like C2-type domain in the interval 144-228; sequence HLTVLVAPRM…ATLNETRSIN (85 aa).

Belongs to the CD200R family. As to expression, expressed in peripheral blood lymphocytes (PBL) and peripheral blood mononuclear cells (PBMC).

It is found in the membrane. This Gallus gallus (Chicken) protein is Cell surface glycoprotein CD200 receptor 1-B (CD200R1B).